The sequence spans 1456 residues: Ig-like and fibronectin type-III domain-containing protein C27B7.7 (1456 aa).

Residues 1–16 (MISLSLVLLLLFGVRC) form the signal peptide. 2 Fibronectin type-III domains span residues 24 to 128 (NDDS…SINT) and 132 to 227 (IPKA…TNST). Residues Asn-64, Asn-146, Asn-164, Asn-198, and Asn-225 are each glycosylated (N-linked (GlcNAc...) asparagine). One can recognise an Ig-like 1 domain in the interval 236–322 (PDEEYTADPQ…DAGDSSKEVN (87 aa)). An intrachain disulfide couples Cys-254 to Cys-308. In terms of domain architecture, Fibronectin type-III 3 spans 328 to 426 (PGSPPSEITL…VAMERDTQPI (99 aa)). 3 N-linked (GlcNAc...) asparagine glycosylation sites follow: Asn-471, Asn-497, and Asn-517. Fibronectin type-III domains are found at residues 531 to 631 (APTQ…TLNG), 636 to 736 (PPDN…TAYS), and 737 to 846 (EVPI…WFRT). Asn-658, Asn-691, and Asn-692 each carry an N-linked (GlcNAc...) asparagine glycan. The region spanning 841-948 (PRWFRTGHGK…GSSSASVEIR (108 aa)) is the Ig-like 2 domain. The cysteines at positions 877 and 932 are disulfide-linked. Asn-893, Asn-898, Asn-969, Asn-1091, Asn-1120, Asn-1133, Asn-1151, Asn-1207, Asn-1268, Asn-1277, Asn-1298, Asn-1350, Asn-1357, and Asn-1382 each carry an N-linked (GlcNAc...) asparagine glycan. Residues 955 to 1050 (PPENIILTAY…SCISDVLYET (96 aa)) form the Fibronectin type-III 7 domain. Fibronectin type-III domains are found at residues 1148-1234 (APTN…TPNG), 1236-1343 (PKTA…ISFD), and 1347-1438 (VIDN…SSPS). Residues 1419 to 1456 (LGRESPPSEEIDLEFISSPSPTPIISGSRRKVIKEPPL) form a disordered region. The segment covering 1434–1445 (ISSPSPTPIISG) has biased composition (low complexity).

It localises to the secreted. This chain is Ig-like and fibronectin type-III domain-containing protein C27B7.7, found in Caenorhabditis elegans.